We begin with the raw amino-acid sequence, 568 residues long: General O-oligosaccharyltransferase (568 aa).

12 helical membrane passes run 17 to 37 (VAVMRFLLLLLTAVLISLAWL), 46 to 66 (LTFASEMLSFAAFLSLLALFL), 78 to 98 (LALPVVFIPMIQWGFGLVVDF), 101 to 121 (ALLSSAYLLGFWLTMLLGYNL), 132 to 152 (FTLSSYLLFAVALLTSLIACI), 176 to 196 (FAQPNNMSTFLILGLLGCLYL), 214 to 234 (IVFAITLSQSRTAWVFGLFFI), 251 to 271 (YAVLLWAIGFFAVGLLFPRFT), 349 to 369 (LLVWNGWLLGGLITICILIWI), 376 to 396 (AKTTESIIACLMVSAVWIHTL), 397 to 417 (LEYPLQYAYFLLPVGFLMGLI), and 429 to 449 (VPVSVIRSIWVIGIMLLALIW).

Belongs to the PglL O-oligosaccharyltransferase family.

It is found in the cell membrane. Catalyzes the O-glycosylation of multiple protein targets. Is responsible for general protein glycosylation within A.baylyi ADP1. Does not act as an O-antigen ligase. The sequence is that of General O-oligosaccharyltransferase from Acinetobacter baylyi (strain ATCC 33305 / BD413 / ADP1).